The following is a 272-amino-acid chain: Aquaporin-11 (272 aa).

The Cytoplasmic portion of the chain corresponds to 1 to 14 (MTALRALWSEMQDT). A helical transmembrane segment spans residues 15–35 (CTSLGLMLSVVLLAGLARVVA). At 36–47 (RQQQLHRPMAHA) the chain is on the lumenal side. The chain crosses the membrane as a helical span at residues 48–68 (FVLEFLATLQLCCCTHELLLL). At 69–75 (SEQEPAH) the chain is on the cytoplasmic side. The helical transmembrane segment at 76 to 96 (PTWPLTLIYFFTLVHGLTLVG) threads the bilayer. The Lumenal portion of the chain corresponds to 97-167 (TSSNPCGVMM…NPIQVDLPKA (71 aa)). Residues 100-102 (NPC) carry the NPC motif. A helical membrane pass occupies residues 168-188 (VIVEALCSFIFHSALLNFQEV). Topologically, residues 189 to 195 (RPKLRIH) are cytoplasmic. Residues 196–216 (LLAALITFLVYAGGSLTGAVF) form a helical membrane-spanning segment. The NPA signature appears at 217 to 219 (NPA). Topologically, residues 217 to 235 (NPALALSLHFKCFDEAFLQ) are lumenal. Residues 236-256 (FFIVYWLAPSLGILLMILMFS) form a helical membrane-spanning segment. The Cytoplasmic segment spans residues 257–272 (FFLPWLYNNHTINKKE).

This sequence belongs to the MIP/aquaporin (TC 1.A.8) family. AQP11/AQP12 subfamily. In terms of assembly, homodimer; disulfide-linked. Homotetramer. Can also form homomultimer. Not glycosylated. In terms of tissue distribution, expressed in retina specifically at retinal Mueller glial cells.

The protein localises to the endoplasmic reticulum membrane. Its subcellular location is the cytoplasmic vesicle membrane. It is found in the cell membrane. The enzyme catalyses H2O(in) = H2O(out). It carries out the reaction glycerol(in) = glycerol(out). The catalysed reaction is H2O2(out) = H2O2(in). Channel protein that facilitates the transport of water, glycerol and hydrogen peroxide across membrane of cell or organelles guaranteeing intracellular homeostasis in several organes like liver, kidney and brain. In situation of stress, participates in endoplasmic reticulum (ER) homeostasis by regulating redox homeostasis through the transport of hydrogen peroxide across the endoplasmic reticulum membrane thereby regulating the oxidative stress through the NADPH oxidase 2 pathway. Plays a role by maintaining an environment suitable for translation or protein foldings in the ER lumen namely by participating in the PKD1 glycosylation processing resulting in regulation of PKD1 membrane trafficking thereby preventing the accumulation of unfolding protein in ER. Plays a role in the proximal tubule function by regulating its endosomal acidification. May play a role in postnatal kidney development. The chain is Aquaporin-11 from Equus caballus (Horse).